The primary structure comprises 380 residues: Large ribosomal subunit protein mL38 (380 aa).

The transit peptide at methionine 1 to serine 26 directs the protein to the mitochondrion. Positions serine 98 to alanine 123 form a coiled coil.

This sequence belongs to the phosphatidylethanolamine-binding protein family. Mitochondrion-specific ribosomal protein mL38 subfamily. Component of the mitochondrial ribosome large subunit (39S) which comprises a 16S rRNA and about 50 distinct proteins.

The protein resides in the mitochondrion. This chain is Large ribosomal subunit protein mL38 (Mrpl38), found in Rattus norvegicus (Rat).